The primary structure comprises 304 residues: N-carbamoyl-D-amino acid hydrolase (304 aa).

In terms of domain architecture, CN hydrolase spans 5-276 (MILAVGQQGP…DEVITAAVCL (272 aa)). Active-site residues include Glu-47, Lys-127, and Cys-172.

As to quaternary structure, homotetramer.

It carries out the reaction an N-carbamoyl-D-amino acid + H2O + 2 H(+) = a D-alpha-amino acid + NH4(+) + CO2. The activity decreases with increasing concentration of H(2)O(2). Has 68% and 43% of activity remaining upon treatment with 0.1 and 0.2 mM H(2)O(2) for 30 minutes, respectively. Inhibited significantly by 2 mM Zn(2+), Cu(2+) and Ag(+), moderately by Co(2+), Mn(2+), Sn(2+) and Mg(2+), and only slightly by Ba(2+). Slightly activated by Fe(2+) and Ca(2+). No effect on activity by metal chelators EDTA and 8-hydroxyquinoline at 2 mM or by dithiothreitol, 2-mercaptoethanol or phenylmethanesulfonyl fluoride. Catalyzes the hydrolysis of N-carbamoyl-D-amino acids to the corresponding D-amino acids. Hydrolyzes aromatic and aliphatic N-carbamoyl-D-amino acids in vitro. Effectively hydrolyzes N-carbamoyl-D-p-hydroxyphenylglycine and N-carbamoyl-DL-p-hydroxyphenylglycine, and to a lesser extent N-carbamoyl-D-methionine. No activity for N-carbamoyl-L-amino acids, N-carbamoyl-beta-alanine or (RS)-alpha-ethyl-N-carbamoylphenylglycine in vitro. In Ensifer adhaerens (Sinorhizobium morelense), this protein is N-carbamoyl-D-amino acid hydrolase.